A 133-amino-acid polypeptide reads, in one-letter code: Small ribosomal subunit protein uS8 (133 aa).

This sequence belongs to the universal ribosomal protein uS8 family. In terms of assembly, part of the 30S ribosomal subunit. Contacts proteins S5 and S12.

Functionally, one of the primary rRNA binding proteins, it binds directly to 16S rRNA central domain where it helps coordinate assembly of the platform of the 30S subunit. The sequence is that of Small ribosomal subunit protein uS8 from Chlamydia pneumoniae (Chlamydophila pneumoniae).